The following is a 91-amino-acid chain: DNA-binding protein HU (91 aa).

Belongs to the bacterial histone-like protein family.

Functionally, histone-like DNA-binding protein which is capable of wrapping DNA to stabilize it, and thus to prevent its denaturation under extreme environmental conditions. Also seems to act as a fortuitous virulence factor in delayed sequelae by binding to heparan sulfate-proteoglycans in the extracellular matrix of target organs and acting as a nidus for in situ immune complex formation. In Streptococcus downei (Streptococcus sobrinus), this protein is DNA-binding protein HU (hup).